A 531-amino-acid polypeptide reads, in one-letter code: Probable cytochrome P450 4e1 (531 aa).

Heme-binding residues include Glu307 and Cys444.

The protein belongs to the cytochrome P450 family. The cofactor is heme.

The protein resides in the endoplasmic reticulum membrane. Its subcellular location is the microsome membrane. Functionally, may be involved in the metabolism of insect hormones and in the breakdown of synthetic insecticides. This is Probable cytochrome P450 4e1 (Cyp4e1) from Drosophila melanogaster (Fruit fly).